The sequence spans 1556 residues: uncharacterized protein (1556 aa).

Serine 2 is modified (N-acetylserine). Residues 145-156 show a composition bias toward basic and acidic residues; sequence NQLENRKSLERK. A disordered region spans residues 145-170; it reads NQLENRKSLERKPSRKRRKKNSNVND. Positions 378-583 constitute a Helicase ATP-binding domain; the sequence is SGDYPVCAKG…MIMSYLKLHP (206 aa). Position 391-398 (391-398) interacts with ATP; that stretch reads EEMGLGKT. Phosphoserine is present on serine 810. Residues 810–850 are disordered; that stretch reads SEDEDEHMDERFGEKETSSGDESDREINGAKNHDNHNNDGM. Composition is skewed to basic and acidic residues over residues 817 to 827 and 834 to 846; these read MDERFGEKETS and REIN…DNHN. The RING-type zinc-finger motif lies at 1239–1277; that stretch reads CSICLGEVEIGAIIKCGHYFCKSCILTWLRAHSKCPICK. The span at 1297 to 1309 shows a compositional bias: basic and acidic residues; the sequence is REKEIQEPRREGA. 2 disordered regions span residues 1297–1319 and 1508–1534; these read REKE…SNEN and EKSK…AKFE. The segment covering 1310-1319 has biased composition (low complexity); sequence DSSQDNSNEN. The 169-residue stretch at 1363 to 1531 folds into the Helicase C-terminal domain; sequence KLISYLRLKS…ETDNEESDDA (169 aa). Basic and acidic residues predominate over residues 1508–1518; sequence EKSKKGDKYDE. The segment covering 1519-1529 has biased composition (acidic residues); that stretch reads AQDETDNEESD.

It belongs to the SNF2/RAD54 helicase family.

It is found in the nucleus. Its function is as follows. Is probably involved in a pathway contributing to genomic integrity. This is an uncharacterized protein from Saccharomyces cerevisiae (strain ATCC 204508 / S288c) (Baker's yeast).